We begin with the raw amino-acid sequence, 184 residues long: dCTP deaminase (184 aa).

107-112 (KSTYAR) contributes to the dCTP binding site. Glu133 serves as the catalytic Proton donor/acceptor. Gln152, Tyr166, and Gln176 together coordinate dCTP.

Belongs to the dCTP deaminase family. As to quaternary structure, homotrimer.

It carries out the reaction dCTP + H2O + H(+) = dUTP + NH4(+). Its pathway is pyrimidine metabolism; dUMP biosynthesis; dUMP from dCTP (dUTP route): step 1/2. Its function is as follows. Catalyzes the deamination of dCTP to dUTP. The sequence is that of dCTP deaminase from Granulibacter bethesdensis (strain ATCC BAA-1260 / CGDNIH1).